A 490-amino-acid polypeptide reads, in one-letter code: Phosphoglucosamine mutase (490 aa).

Ser-139 serves as the catalytic Phosphoserine intermediate. Mg(2+)-binding residues include Ser-139, Asp-279, Asp-281, and Asp-283. Residue Ser-139 is modified to Phosphoserine.

This sequence belongs to the phosphohexose mutase family. It depends on Mg(2+) as a cofactor. Activated by phosphorylation.

The enzyme catalyses alpha-D-glucosamine 1-phosphate = D-glucosamine 6-phosphate. Catalyzes the conversion of glucosamine-6-phosphate to glucosamine-1-phosphate. This is Phosphoglucosamine mutase from Nostoc sp. (strain PCC 7120 / SAG 25.82 / UTEX 2576).